A 323-amino-acid chain; its full sequence is Fructokinase-1 (323 aa).

This sequence belongs to the carbohydrate kinase PfkB family. In terms of tissue distribution, expressed in root, endosperm and leaf tissues.

The enzyme catalyses D-fructose + ATP = D-fructose 6-phosphate + ADP + H(+). Its pathway is glycan biosynthesis; starch biosynthesis. Its activity is regulated as follows. Completely inhibited at 50 mM ATP, but not inhibited at high fructose concentration. Functionally, fructokinase that may play an important role in maintaining the flux of carbon towards starch formation. May also be involved in a sugar-sensing pathway. The chain is Fructokinase-1 from Oryza sativa subsp. japonica (Rice).